The primary structure comprises 176 residues: Negative modulator of initiation of replication (176 aa).

Belongs to the SeqA family. As to quaternary structure, homodimer. Polymerizes to form helical filaments.

The protein localises to the cytoplasm. Functionally, negative regulator of replication initiation, which contributes to regulation of DNA replication and ensures that replication initiation occurs exactly once per chromosome per cell cycle. Binds to pairs of hemimethylated GATC sequences in the oriC region, thus preventing assembly of replication proteins and re-initiation at newly replicated origins. Repression is relieved when the region becomes fully methylated. The sequence is that of Negative modulator of initiation of replication from Hamiltonella defensa subsp. Acyrthosiphon pisum (strain 5AT).